Reading from the N-terminus, the 459-residue chain is Probable 3-ketoacyl-CoA synthase 14 (459 aa).

The first 25 residues, 1-25, serve as a signal peptide directing secretion; that stretch reads MFIAMADFKLLLLILILLSLFELDL. A helical membrane pass occupies residues 32–52; that stretch reads FFSPFPVKIGLLLISIFFYAY. The FAE domain occupies 52–334; that stretch reads YSTTRSKPVY…FILFLVKSKL (283 aa). Active-site residues include H268, H352, H356, H385, and N389.

This sequence belongs to the thiolase-like superfamily. Chalcone/stilbene synthases family. In terms of tissue distribution, expressed in siliques.

The protein localises to the membrane. The enzyme catalyses a very-long-chain acyl-CoA + malonyl-CoA + H(+) = a very-long-chain 3-oxoacyl-CoA + CO2 + CoA. Its pathway is lipid metabolism; fatty acid biosynthesis. The sequence is that of Probable 3-ketoacyl-CoA synthase 14 from Arabidopsis thaliana (Mouse-ear cress).